A 365-amino-acid polypeptide reads, in one-letter code: Serine/threonine-protein kinase SAPK6 (365 aa).

In terms of domain architecture, Protein kinase spans 4–260 (YELLKDIGSG…IREIRNHPWF (257 aa)). ATP-binding positions include 10–18 (IGSGNFGVA) and lysine 33. The Proton acceptor role is filled by aspartate 123. The segment at 298–365 (VQEAKTPPPS…AHASCDLQKS (68 aa)) is disordered. Positions 317-347 (TEEEEQEDGKNPDDDEGDRDEEEGEEGDSED) are enriched in acidic residues.

This sequence belongs to the protein kinase superfamily. Ser/Thr protein kinase family. As to quaternary structure, interacts with BZIP46. Post-translationally, may be phosphorylated. As to expression, expressed in leaf blades and leaf sheaths. Expressed in shoots and roots of young seedlings.

It carries out the reaction L-seryl-[protein] + ATP = O-phospho-L-seryl-[protein] + ADP + H(+). It catalyses the reaction L-threonyl-[protein] + ATP = O-phospho-L-threonyl-[protein] + ADP + H(+). Activated by hyperosmotic stress. Its function is as follows. May play a role in signal transduction of hyperosmotic response. Can phosphorylate ABI5 in vitro. Can phosphorylate BZIP46 in vitro. The chain is Serine/threonine-protein kinase SAPK6 from Oryza sativa subsp. japonica (Rice).